A 296-amino-acid polypeptide reads, in one-letter code: Ribosomal protein L11 methyltransferase (296 aa).

4 residues coordinate S-adenosyl-L-methionine: Thr-145, Gly-166, Asp-188, and Asn-230.

Belongs to the methyltransferase superfamily. PrmA family.

Its subcellular location is the cytoplasm. It catalyses the reaction L-lysyl-[protein] + 3 S-adenosyl-L-methionine = N(6),N(6),N(6)-trimethyl-L-lysyl-[protein] + 3 S-adenosyl-L-homocysteine + 3 H(+). Its function is as follows. Methylates ribosomal protein L11. The sequence is that of Ribosomal protein L11 methyltransferase from Photorhabdus laumondii subsp. laumondii (strain DSM 15139 / CIP 105565 / TT01) (Photorhabdus luminescens subsp. laumondii).